The primary structure comprises 364 residues: GTPase Obg (364 aa).

The Obg domain maps to 1–159 (MKFVDEAYID…KSLKLELKVL (159 aa)). The 175-residue stretch at 160–334 (ADVGLLGMPN…LVKTIYQHVK (175 aa)) folds into the OBG-type G domain. GTP is bound by residues 166 to 173 (GMPNAGKS), 191 to 195 (FTTLH), 213 to 216 (DLPG), 284 to 287 (NKLD), and 315 to 317 (SAL). Positions 173 and 193 each coordinate Mg(2+). The tract at residues 337 to 364 (QKSEQPEEEVDPRFIELPPEPAKPASSD) is disordered.

It belongs to the TRAFAC class OBG-HflX-like GTPase superfamily. OBG GTPase family. As to quaternary structure, monomer. The cofactor is Mg(2+).

The protein resides in the cytoplasm. Its function is as follows. An essential GTPase which binds GTP, GDP and possibly (p)ppGpp with moderate affinity, with high nucleotide exchange rates and a fairly low GTP hydrolysis rate. Plays a role in control of the cell cycle, stress response, ribosome biogenesis and in those bacteria that undergo differentiation, in morphogenesis control. In Polaromonas naphthalenivorans (strain CJ2), this protein is GTPase Obg.